Consider the following 261-residue polypeptide: Putative hydro-lyase SH0274 (261 aa).

Belongs to the D-glutamate cyclase family.

This chain is Putative hydro-lyase SH0274, found in Staphylococcus haemolyticus (strain JCSC1435).